The chain runs to 66 residues: Metallothionein (66 aa).

Ser-1 carries the post-translational modification N-acetylserine. Cd(2+) contacts are provided by Cys-9, Cys-13, Cys-18, Cys-20, Cys-24, Cys-26, Cys-30, Cys-32, Cys-35, Cys-38, Cys-40, Cys-45, Cys-47, Cys-51, Cys-57, Cys-59, Cys-63, and Cys-65.

This sequence belongs to the metallothionein superfamily. Type 2 family.

Its function is as follows. The metallothioneins are involved in the cellular sequestration of toxic metal ions and regulation of essential trace elements. The protein is Metallothionein of Arianta arbustorum (Land snail).